We begin with the raw amino-acid sequence, 105 residues long: DNA-directed RNA polymerase subunit omega (105 aa).

This sequence belongs to the RNA polymerase subunit omega family. In terms of assembly, the RNAP catalytic core consists of 2 alpha, 1 beta, 1 beta' and 1 omega subunit. When a sigma factor is associated with the core the holoenzyme is formed, which can initiate transcription.

The catalysed reaction is RNA(n) + a ribonucleoside 5'-triphosphate = RNA(n+1) + diphosphate. Its function is as follows. Promotes RNA polymerase assembly. Latches the N- and C-terminal regions of the beta' subunit thereby facilitating its interaction with the beta and alpha subunits. The sequence is that of DNA-directed RNA polymerase subunit omega from Streptococcus equi subsp. equi (strain 4047).